A 169-amino-acid polypeptide reads, in one-letter code: Adenine phosphoribosyltransferase (169 aa).

It belongs to the purine/pyrimidine phosphoribosyltransferase family. As to quaternary structure, homodimer.

The protein resides in the cytoplasm. The enzyme catalyses AMP + diphosphate = 5-phospho-alpha-D-ribose 1-diphosphate + adenine. Its pathway is purine metabolism; AMP biosynthesis via salvage pathway; AMP from adenine: step 1/1. In terms of biological role, catalyzes a salvage reaction resulting in the formation of AMP, that is energically less costly than de novo synthesis. The protein is Adenine phosphoribosyltransferase of Mycoplasmopsis synoviae (strain 53) (Mycoplasma synoviae).